The following is a 545-amino-acid chain: Signal peptide peptidase-like 4 (545 aa).

The N-terminal stretch at 1 to 25 (MGTSSPEMAAALLLVMAALAGVAAG) is a signal peptide. At 26 to 193 (GDIVHQDDEA…PDRPLVDTAE (168 aa)) the chain is on the lumenal side. N-linked (GlcNAc...) asparagine glycosylation is found at asparagine 81 and asparagine 147. In terms of domain architecture, PA spans 90 to 170 (PIDCCDPPTQ…PKDAGNDLQK (81 aa)). Residues 194–214 (VFLWLMAVGTILCASYWSAWS) form a helical membrane-spanning segment. The Cytoplasmic segment spans residues 215–246 (AREAVIEQEKLLKDGHESSLNLEAGGSSGMVD). A helical membrane pass occupies residues 247 to 267 (INMTSAILFVVIASCFLIMLY). Residues 268 to 276 (KLMSHWFVE) lie on the Lumenal side of the membrane. The chain crosses the membrane as a helical span at residues 277–297 (LLVVIFCIGGVEGLQTCLVAL). The Cytoplasmic segment spans residues 298-317 (LSRWFKPAAESFVKVPFFGA). A helical membrane pass occupies residues 318–338 (VSYLTIAVCPFCIVFAVIWAV). Residues 339-343 (YRRMT) are Lumenal-facing. Residues 344 to 364 (YAWIGQDILGIALIVTVIQIV) traverse the membrane as a helical segment. The Cytoplasmic segment spans residues 365-373 (RIPNLKVGS). A helical transmembrane segment spans residues 374-394 (VLLSCSFLYDIFWVFISKMWF). Residue aspartate 383 is part of the active site. Topologically, residues 395–427 (HESVMIVVARGDKTDEDGVPMLLKIPRMFDPWG) are lumenal. A helical membrane pass occupies residues 428–448 (GFSIIGFGDILLPGLLIAFAL). Aspartate 436 is an active-site residue. Topologically, residues 449-460 (RYDWAAKKTLQS) are cytoplasmic. A helical transmembrane segment spans residues 461–481 (GYFLWSMVAYGSGLMITYVAL). Residues 482–485 (NLMD) lie on the Lumenal side of the membrane. Residues 486-506 (GHGQPALLYIVPFTLGTFIAL) form a helical membrane-spanning segment. Positions 490-492 (PAL) match the PAL motif. The Cytoplasmic segment spans residues 507–545 (GRKRGELRNLWTRGQPERVCTHMHMQPSPKDTNCDAVSS).

The protein belongs to the peptidase A22B family. Glycosylated.

The protein localises to the endosome membrane. In terms of biological role, intramembrane-cleaving aspartic protease (I-CLiP) that cleaves type II membrane signal peptides in the hydrophobic plane of the membrane. The polypeptide is Signal peptide peptidase-like 4 (SPPL4) (Oryza sativa subsp. japonica (Rice)).